The primary structure comprises 535 residues: Bifunctional purine biosynthesis protein PurH (535 aa).

The 148-residue stretch at 1-148 folds into the MGS-like domain; sequence MNNARPIRRA…KNHKDTTIIV (148 aa).

This sequence belongs to the PurH family.

It carries out the reaction (6R)-10-formyltetrahydrofolate + 5-amino-1-(5-phospho-beta-D-ribosyl)imidazole-4-carboxamide = 5-formamido-1-(5-phospho-D-ribosyl)imidazole-4-carboxamide + (6S)-5,6,7,8-tetrahydrofolate. The catalysed reaction is IMP + H2O = 5-formamido-1-(5-phospho-D-ribosyl)imidazole-4-carboxamide. It functions in the pathway purine metabolism; IMP biosynthesis via de novo pathway; 5-formamido-1-(5-phospho-D-ribosyl)imidazole-4-carboxamide from 5-amino-1-(5-phospho-D-ribosyl)imidazole-4-carboxamide (10-formyl THF route): step 1/1. Its pathway is purine metabolism; IMP biosynthesis via de novo pathway; IMP from 5-formamido-1-(5-phospho-D-ribosyl)imidazole-4-carboxamide: step 1/1. The polypeptide is Bifunctional purine biosynthesis protein PurH (Shewanella woodyi (strain ATCC 51908 / MS32)).